We begin with the raw amino-acid sequence, 181 residues long: Oligoribonuclease (181 aa).

In terms of domain architecture, Exonuclease spans 8 to 171 (LIWIDMEMTG…ADIYDSIEEL (164 aa)). Residue Tyr129 is part of the active site.

It belongs to the oligoribonuclease family.

It is found in the cytoplasm. 3'-to-5' exoribonuclease specific for small oligoribonucleotides. The chain is Oligoribonuclease from Nitrosomonas europaea (strain ATCC 19718 / CIP 103999 / KCTC 2705 / NBRC 14298).